A 39-amino-acid chain; its full sequence is Phosphate starvation-inducible protein 1 (39 aa).

It localises to the cell outer membrane. The protein is Phosphate starvation-inducible protein 1 of Pseudomonas fluorescens.